The sequence spans 126 residues: Fluoride-specific ion channel FluC (126 aa).

The next 4 membrane-spanning stretches (helical) occupy residues 4–24 (LLLVCLGGALGSGARYLTSAW), 36–56 (GTLLVNVSGSFLLAGIMTASL), 67–85 (LFLAAGVMGGFTTYSSFNY), and 101–121 (AYLLATVVGCLVAAFAATLLV). Glycine 75 and threonine 78 together coordinate Na(+).

It belongs to the fluoride channel Fluc/FEX (TC 1.A.43) family.

Its subcellular location is the cell inner membrane. The enzyme catalyses fluoride(in) = fluoride(out). Na(+) is not transported, but it plays an essential structural role and its presence is essential for fluoride channel function. Fluoride-specific ion channel. Important for reducing fluoride concentration in the cell, thus reducing its toxicity. This Anaeromyxobacter sp. (strain K) protein is Fluoride-specific ion channel FluC.